The primary structure comprises 440 residues: 3-phosphoshikimate 1-carboxyvinyltransferase (440 aa).

3 residues coordinate 3-phosphoshikimate: Lys-26, Ser-27, and Arg-31. Residue Lys-26 coordinates phosphoenolpyruvate. Phosphoenolpyruvate contacts are provided by Gly-99 and Arg-127. The 3-phosphoshikimate site is built by Ser-172, Gln-174, Asp-320, and Lys-347. Gln-174 contacts phosphoenolpyruvate. Catalysis depends on Asp-320, which acts as the Proton acceptor. The phosphoenolpyruvate site is built by Arg-351 and Arg-392.

This sequence belongs to the EPSP synthase family. In terms of assembly, monomer.

Its subcellular location is the cytoplasm. The enzyme catalyses 3-phosphoshikimate + phosphoenolpyruvate = 5-O-(1-carboxyvinyl)-3-phosphoshikimate + phosphate. Its pathway is metabolic intermediate biosynthesis; chorismate biosynthesis; chorismate from D-erythrose 4-phosphate and phosphoenolpyruvate: step 6/7. Its function is as follows. Catalyzes the transfer of the enolpyruvyl moiety of phosphoenolpyruvate (PEP) to the 5-hydroxyl of shikimate-3-phosphate (S3P) to produce enolpyruvyl shikimate-3-phosphate and inorganic phosphate. The chain is 3-phosphoshikimate 1-carboxyvinyltransferase from Xanthomonas axonopodis pv. citri (strain 306).